Reading from the N-terminus, the 271-residue chain is Aminoglycoside 3'-phosphotransferase (271 aa).

The active-site Proton acceptor is the Asp-198.

It belongs to the aminoglycoside phosphotransferase family.

The enzyme catalyses kanamycin A + ATP = kanamycin 3'-phosphate + ADP + H(+). Resistance to kanamycin and structurally-related aminoglycosides, including amikacin. This is Aminoglycoside 3'-phosphotransferase (aphA) from Escherichia coli.